The following is a 152-amino-acid chain: Protein D1 (152 aa).

The protein belongs to the phosphatidylethanolamine-binding protein family.

This is Protein D1 (D1) from Onchocerca volvulus.